Consider the following 455-residue polypeptide: METEIPVNEKETSFRRRVYTTIETLIDIENTDQLQEHLPHLHCLGWDEVVEERYVNKQCGFPSCQKAPPKITRNQMFEIDRKEGKIFEFRKQRAKFCSEMCYQKSSFVRKQLDEHPLWITGLTEARTQKVYEVPDESFVSPIAEKSEPVDSQFKKEPSIWLVTDSIIAKVQDMKLSEEAEEPKSLDPEDQDIEPFKLTDDDKDFIKSIKEFRNSNFGPPSTSKLLKTAPKPVLSAKDRKKEDEVLAKLRAKYGNKNALQKKPPILIEAQEIHSKLKTMEKAKEAWLVDLIKSWFTPETRKLVREGARPTGGAAEQILMDFLSGKKVDAEKLVNLPNLDKYNVKEKRLNIFLHSIRNHWMDLEARLHLTPTRRDILSRVASTFQLDSENITGWTKREINSIVIALFIVICLVDVELGDDYFKKDNASPELTAISNELCGLDSFQITGLHAAIKSQC.

The RTR1-type zinc-finger motif lies at 36-121 (EHLPHLHCLG…LDEHPLWITG (86 aa)). Residues Cys59, Cys64, Cys97, and Cys101 each contribute to the Zn(2+) site.

The protein belongs to the RPAP2 family.

It localises to the nucleus. The catalysed reaction is O-phospho-L-seryl-[protein] + H2O = L-seryl-[protein] + phosphate. It catalyses the reaction O-phospho-L-threonyl-[protein] + H2O = L-threonyl-[protein] + phosphate. In terms of biological role, putative RNA polymerase II subunit B1 C-terminal domain (CTD) phosphatase involved in RNA polymerase II transcription regulation. The polypeptide is Putative RNA polymerase II subunit B1 CTD phosphatase rpap-2 (Caenorhabditis elegans).